A 352-amino-acid chain; its full sequence is Histidine biosynthesis bifunctional protein HisB (352 aa).

The segment at 1-164 is histidinol-phosphatase; sequence MSQKILFIDR…EIENEILSSF (164 aa). Asp9 serves as the catalytic Nucleophile. Asp9 and Asp11 together coordinate Mg(2+). Asp11 (proton donor) is an active-site residue. Positions 93, 95, 101, and 103 each coordinate Zn(2+). Residue Asp130 coordinates Mg(2+). Residues 165-352 form an imidazoleglycerol-phosphate dehydratase region; the sequence is RSASYQRTTK…ENLASSKGVI (188 aa).

This sequence in the N-terminal section; belongs to the histidinol-phosphatase family. In the C-terminal section; belongs to the imidazoleglycerol-phosphate dehydratase family. It depends on Mg(2+) as a cofactor. The cofactor is Zn(2+).

It localises to the cytoplasm. It carries out the reaction D-erythro-1-(imidazol-4-yl)glycerol 3-phosphate = 3-(imidazol-4-yl)-2-oxopropyl phosphate + H2O. It catalyses the reaction L-histidinol phosphate + H2O = L-histidinol + phosphate. It functions in the pathway amino-acid biosynthesis; L-histidine biosynthesis; L-histidine from 5-phospho-alpha-D-ribose 1-diphosphate: step 6/9. The protein operates within amino-acid biosynthesis; L-histidine biosynthesis; L-histidine from 5-phospho-alpha-D-ribose 1-diphosphate: step 8/9. The protein is Histidine biosynthesis bifunctional protein HisB of Campylobacter jejuni subsp. jejuni serotype O:6 (strain 81116 / NCTC 11828).